Here is a 662-residue protein sequence, read N- to C-terminus: Threonine--tRNA ligase (662 aa).

One can recognise a TGS domain in the interval 1–64 (MSQSVSLTFP…ADGKIEIITR (64 aa)). Residues 245 to 547 (DHRRLGREMD…LIENFAGHMP (303 aa)) are catalytic. Positions 341, 392, and 524 each coordinate Zn(2+).

It belongs to the class-II aminoacyl-tRNA synthetase family. Homodimer. Zn(2+) is required as a cofactor.

Its subcellular location is the cytoplasm. It carries out the reaction tRNA(Thr) + L-threonine + ATP = L-threonyl-tRNA(Thr) + AMP + diphosphate + H(+). Catalyzes the attachment of threonine to tRNA(Thr) in a two-step reaction: L-threonine is first activated by ATP to form Thr-AMP and then transferred to the acceptor end of tRNA(Thr). Also edits incorrectly charged L-seryl-tRNA(Thr). The chain is Threonine--tRNA ligase from Rhizobium rhizogenes (strain K84 / ATCC BAA-868) (Agrobacterium radiobacter).